A 753-amino-acid polypeptide reads, in one-letter code: Protein transport protein SEC23-1 (753 aa).

Residues Cys-56, Cys-61, Cys-80, and Cys-83 each contribute to the Zn(2+) site.

It belongs to the SEC23/SEC24 family. SEC23 subfamily. In terms of assembly, the COPII coat is composed of at least 5 proteins: the SEC23/24 complex, the SEC13/31 complex, and the protein SAR1.

Its subcellular location is the cytoplasm. The protein localises to the cytoplasmic vesicle. It is found in the COPII-coated vesicle membrane. It localises to the endoplasmic reticulum membrane. The protein resides in the golgi apparatus membrane. In terms of biological role, component of the coat protein complex II (COPII) which promotes the formation of transport vesicles from the endoplasmic reticulum (ER). The coat has two main functions, the physical deformation of the endoplasmic reticulum membrane into vesicles and the selection of cargo molecules. This is Protein transport protein SEC23-1 (SEC231) from Candida glabrata (strain ATCC 2001 / BCRC 20586 / JCM 3761 / NBRC 0622 / NRRL Y-65 / CBS 138) (Yeast).